The sequence spans 265 residues: F-box only protein 6 (265 aa).

The F-box domain occupies 3-50; the sequence is LVSINQLPENILLEVFMHVPARQLLRNCRPVCCLWRDLIDLVSLWKRK. The 182-residue stretch at 71-252 folds into the FBA domain; that stretch reads FYFLCSLRRN…VTNSSVVISH (182 aa). Residue serine 251 is modified to Phosphoserine.

As to quaternary structure, part of a SCF (SKP1-cullin-F-box) protein ligase complex. Interacts with VCP, CHEK1 and CUL1.

Its subcellular location is the cytoplasm. It participates in protein modification; protein ubiquitination. Its function is as follows. Substrate-recognition component of some SCF (SKP1-CUL1-F-box protein)-type E3 ubiquitin ligase complexes. Involved in endoplasmic reticulum-associated degradation pathway (ERAD) for misfolded lumenal proteins by recognizing and binding sugar chains on unfolded glycoproteins that are retrotranslocated into the cytosol and promoting their ubiquitination and subsequent degradation. Able to recognize and bind denatured glycoproteins, which are modified with not only high-mannose but also complex-type oligosaccharides. Also recognizes sulfated glycans. Also involved in DNA damage response by specifically recognizing activated CHEK1 (phosphorylated on 'Ser-345'), promoting its ubiquitination and degradation. Ubiquitination of CHEK1 is required to ensure that activated CHEK1 does not accumulate as cells progress through S phase, or when replication forks encounter transient impediments during normal DNA replication. In Bos taurus (Bovine), this protein is F-box only protein 6 (FBXO6).